A 173-amino-acid chain; its full sequence is C-phycocyanin beta subunit (173 aa).

An N4-methylasparagine modification is found at Asn73. (2R,3E)-phycocyanobilin-binding residues include Cys83 and Cys154.

The protein belongs to the phycobiliprotein family. Heterodimer of an alpha and a beta subunit, which further assembles into trimers and the trimers into hexamers. Post-translationally, contains two covalently linked bilin chromophores.

Its subcellular location is the cellular thylakoid membrane. Functionally, light-harvesting photosynthetic bile pigment-protein from the phycobiliprotein complex (phycobilisome, PBS). Phycocyanin is the major phycobiliprotein in the PBS rod. This Synechococcus elongatus (strain ATCC 33912 / PCC 7942 / FACHB-805) (Anacystis nidulans R2) protein is C-phycocyanin beta subunit (cpcB1).